Reading from the N-terminus, the 33-residue chain is Large ribosomal subunit protein eL28 (33 aa).

Belongs to the eukaryotic ribosomal protein eL28 family. Component of the large ribosomal subunit.

It localises to the cytoplasm. Component of the large ribosomal subunit. The ribosome is a large ribonucleoprotein complex responsible for the synthesis of proteins in the cell. The polypeptide is Large ribosomal subunit protein eL28 (rpl28) (Xenopus laevis (African clawed frog)).